We begin with the raw amino-acid sequence, 357 residues long: Acyl-CoA Delta12-desaturase (357 aa).

2 helical membrane passes run 49–69 and 72–92; these read VLWF…IFAS and IYTT…ITAG. The Fe cation site is built by H94, H99, H131, H134, and H135. The short motif at 94-99 is the Histidine box-1 element; that stretch reads HRLWAH. The Histidine box-2 signature appears at 131–135; it reads HRVHH. Helical transmembrane passes span 195–215 and 223–245; these read LVPF…WGET and STMF…AHMW. H243, H272, H275, and H276 together coordinate Fe cation. Positions 272 to 276 match the Histidine box-3 motif; sequence HNFHH.

This sequence belongs to the fatty acid desaturase type 1 family. Requires Fe(2+) as cofactor.

The protein localises to the membrane. The catalysed reaction is (9Z)-octadecenoyl-CoA + 2 Fe(II)-[cytochrome b5] + O2 + 2 H(+) = (9Z,12Z)-octadecadienoyl-CoA + 2 Fe(III)-[cytochrome b5] + 2 H2O. It catalyses the reaction (9Z)-hexadecenoyl-CoA + 2 Fe(II)-[cytochrome b5] + O2 + 2 H(+) = (9Z,12Z)-hexadecadienoyl-CoA + 2 Fe(III)-[cytochrome b5] + 2 H2O. It carries out the reaction hexadecanoyl-CoA + 2 Fe(II)-[cytochrome b5] + O2 + 2 H(+) = (9Z)-hexadecenoyl-CoA + 2 Fe(III)-[cytochrome b5] + 2 H2O. Its function is as follows. Catalyzes the formation of a Delta12 double bond, acting on monounsaturated fatty acyl substrates like palmitoleoyl-CoA ((9Z)-hexadecenoyl-CoA) and oleoyl-CoA ((9Z)-octadecenoyl-CoA) with higher desaturation activity on (9Z)-octadecenoyl-CoA than (9Z)-hexadecenoyl-CoA. Requires preexisting cis double bond at the Delta9 position of fatty acyls to be able to insert the Delta12 double bond. Delta12-desaturation of (9Z)-octadecenoyl-CoA in insects produces (9Z,12Z)-octadecadienoyl-CoA (linoleoyl-CoA) which may be used to supply precursors of crucial mediators of immunity and reproduction and other essential functions. Can also catalyze Delta9-desaturation on saturated fatty acyl substrates like palmitoyl-CoA (hexadecanoyl-CoA) but with lower efficiency. The sequence is that of Acyl-CoA Delta12-desaturase from Acheta domesticus (House cricket).